The sequence spans 360 residues: Heme A synthase (360 aa).

Transmembrane regions (helical) follow at residues 13–33 (AVRWWLISVAALIALMVLVGG), 99–119 (LLGRFIGVAYLLPFLFFLWRG), 129–149 (LWLLFALGGLQGAVGWWMVAS), 160–180 (YRLATHLVLALLIFAGIVWTV), and 199–219 (SALLLVVTFVQIYLGALVAGL). Heme is bound at residue histidine 263. 3 helical membrane passes run 265–282 (MTAYALFVLAALHAFDAV), 292–312 (GALWLFAAVSLQAVLGILTLL), and 315–335 (VPIGLALAHQAVAIAVLTLAV). Histidine 323 is a binding site for heme.

This sequence belongs to the COX15/CtaA family. Type 2 subfamily. In terms of assembly, interacts with CtaB. The cofactor is heme b.

It localises to the cell membrane. It catalyses the reaction Fe(II)-heme o + 2 A + H2O = Fe(II)-heme a + 2 AH2. The protein operates within porphyrin-containing compound metabolism; heme A biosynthesis; heme A from heme O: step 1/1. Catalyzes the conversion of heme O to heme A by two successive hydroxylations of the methyl group at C8. The first hydroxylation forms heme I, the second hydroxylation results in an unstable dihydroxymethyl group, which spontaneously dehydrates, resulting in the formyl group of heme A. The polypeptide is Heme A synthase (Bradyrhizobium diazoefficiens (strain JCM 10833 / BCRC 13528 / IAM 13628 / NBRC 14792 / USDA 110)).